The chain runs to 427 residues: tRNA(Ile)-lysidine synthase (427 aa).

Position 29-34 (29-34 (SGGVDS)) interacts with ATP.

The protein belongs to the tRNA(Ile)-lysidine synthase family.

The protein resides in the cytoplasm. The enzyme catalyses cytidine(34) in tRNA(Ile2) + L-lysine + ATP = lysidine(34) in tRNA(Ile2) + AMP + diphosphate + H(+). Its function is as follows. Ligates lysine onto the cytidine present at position 34 of the AUA codon-specific tRNA(Ile) that contains the anticodon CAU, in an ATP-dependent manner. Cytidine is converted to lysidine, thus changing the amino acid specificity of the tRNA from methionine to isoleucine. This Thermosipho africanus (strain TCF52B) protein is tRNA(Ile)-lysidine synthase.